Reading from the N-terminus, the 296-residue chain is Haloalkane dehalogenase (296 aa).

The region spanning 31-155 is the AB hydrolase-1 domain; it reads PILFQHGNPT…QDRDLFQAFR (125 aa). N38 provides a ligand contact to chloride. D108 (nucleophile) is an active-site residue. W109 contacts chloride. Residue E132 is the Proton donor of the active site. Residue H272 is the Proton acceptor of the active site.

The protein belongs to the haloalkane dehalogenase family. Type 2 subfamily. In terms of assembly, monomer.

It localises to the periplasm. The catalysed reaction is 1-haloalkane + H2O = a halide anion + a primary alcohol + H(+). It carries out the reaction (3R,6R)-1,3,4,6-tetrachlorocyclohexa-1,4-diene + 2 H2O = 2,5-dichlorocyclohexa-2,5-dien-1,4-diol + 2 chloride + 2 H(+). It participates in xenobiotic degradation; gamma-hexachlorocyclohexane degradation. Its activity is regulated as follows. Competitively inhibited by the key pollutants 1,2-dichloroethane (1,2-DCE) and 1,2-dichloropropane (1,2-DCP). Catalyzes hydrolytic cleavage of carbon-halogen bonds in halogenated aliphatic compounds, leading to the formation of the corresponding primary alcohols, halide ions and protons. Has a broad substrate specificity since not only monochloroalkanes (C3 to C10) but also dichloroalkanes (&gt; C3), bromoalkanes, and chlorinated aliphatic alcohols are good substrates. Shows almost no activity with 1,2-dichloroethane, but very high activity with the brominated analog. Is involved in the degradation of the important environmental pollutant gamma-hexachlorocyclohexane (gamma-HCH or lindane) as it also catalyzes conversion of 1,3,4,6-tetrachloro-1,4-cyclohexadiene (1,4-TCDN) to 2,5-dichloro-2,5-cyclohexadiene-1,4-diol (2,5-DDOL) via the intermediate 2,4,5-trichloro-2,5-cyclohexadiene-1-ol (2,4,5-DNOL). This degradation pathway allows S.japonicum UT26 to grow on gamma-HCH as the sole source of carbon and energy. The protein is Haloalkane dehalogenase of Sphingobium indicum (strain DSM 16413 / CCM 7287 / MTCC 6362 / UT26 / NBRC 101211 / UT26S) (Sphingobium japonicum).